A 216-amino-acid chain; its full sequence is Fibroblast growth factor 17 (216 aa).

The signal sequence occupies residues 1–22; sequence MGAARLLPNLTLCLQLLILCCQ. Asn-137 is a glycosylation site (N-linked (GlcNAc...) asparagine). The disordered stretch occupies residues 190–216; it reads EKQKQFEFVGSAPTRRTKRTRRPQPLT. Basic residues predominate over residues 204–216; the sequence is RRTKRTRRPQPLT.

It belongs to the heparin-binding growth factors family. As to quaternary structure, interacts with FGFR3 and FGFR4. Preferentially expressed in the embryonic brain.

Its subcellular location is the secreted. Plays an important role in the regulation of embryonic development and as signaling molecule in the induction and patterning of the embryonic brain. Required for normal brain development. The chain is Fibroblast growth factor 17 (FGF17) from Homo sapiens (Human).